The following is a 242-amino-acid chain: C-reactive protein 3.3 (242 aa).

The first 24 residues, 1 to 24, serve as a signal peptide directing secretion; that stretch reads MKTFHGPTCGTAVSLCLLLFLTSA. The 212-residue stretch at 30–241 folds into the Pentraxin (PTX) domain; sequence ITSKVKFPPS…GVVLSPNEIC (212 aa). Positions 60 and 63 each coordinate phosphocholine. 2 disulfide bridges follow: cysteine 62/cysteine 125 and cysteine 112/cysteine 144. Residues aspartate 85 and asparagine 86 each contribute to the Ca(2+) site. Asparagine 147 carries N-linked (GlcNAc...) asparagine glycosylation. Glutamine 169, aspartate 170, and glutamine 180 together coordinate Ca(2+). An intrachain disulfide couples cysteine 207 to cysteine 241.

It belongs to the pentraxin family. Homopentamer. Pentraxin (or pentaxin) have a discoid arrangement of 5 non-covalently bound subunits. The cofactor is Ca(2+).

The protein localises to the secreted. Functionally, might serve the role of immunoglobulins. This Limulus polyphemus (Atlantic horseshoe crab) protein is C-reactive protein 3.3.